Consider the following 707-residue polypeptide: F-box/WD repeat-containing protein 7 (707 aa).

Positions 1 to 151 (MNQELLSVGS…SVTNSSSIVD (151 aa)) are disordered. Residue Ser-26 is modified to Phosphoserine; by ATM. A compositionally biased stretch (low complexity) spans 57–68 (GEVVGVEPRPGG). The segment covering 69 to 84 (QNDSQQGQLEENNNRF) has biased composition (polar residues). A compositionally biased stretch (acidic residues) spans 87 to 129 (VDEDSSGNQEEQEEDEEHAGEQDEEDEEEEEMDQESDDFDQSD). Basic and acidic residues predominate over residues 130 to 139 (DSSREDEHTH). Thr-205 is modified (phosphothreonine). Position 227 is a phosphoserine; by SGK1 (Ser-227). In terms of domain architecture, F-box spans 278–324 (RDFISLLPKELALYVLSFLEPKDLLQAAQTCRYWRILAEDNLLWREK). WD repeat units lie at residues 378–418 (GHDD…RTLV), 420–456 (HTGG…CIHT), 459–498 (GHTS…HVLM), 500–536 (HVAA…CLHT), 539–578 (GHTN…HTLT), 580–618 (HQSL…QTLQ), and 622–659 (KHQS…FIRN).

Homodimer; homodimerization plays a role in substrate binding and/or ubiquitination and degradation. Component of the SCF(FBXW7) complex consisting of CUL1, RBX1, SKP1 and FBXW7. Interacts (via F-box domain) with SKP1. Interacts (via F-box domain) with pseudophosphatase STYX; the interaction is direct and prevents FBXW7 interaction with SKP1. Interacts with cyclin-E (CCNE1 or CCNE2). Interacts with PSEN1. Forms a trimeric complex with NOTCH1 and SGK1. Interacts with NOTCH1 intracellular domain/NICD and NOTCH4 intracellular domain/NICD. Interacts with NOTCH2 intracellular domain (N2ICD). Interacts with MYC (when phosphorylated). Interacts with USP28, counteracting ubiquitination of MYC. Interacts with JUN. Found in a complex with JUN and PRR7. Interacts with JUN and PRR7; the interaction inhibits ubiquitination-mediated JUN degradation, promoting its phosphorylation and transcriptional activity. Interacts (when phosphorylated at Thr-205) with PIN1, disrupting FBXW7 dimerization and promoting FBXW7 autoubiquitination and degradation. Interacts with UBE2QL1. Interacts with FAM83D; promotes FBXW7 degradation. Interacts with MYCN; FBXW7 competes with AURKA for binding to unphosphorylated MYCN but not for binding to phosphorylated MYCN. Interacts with STOML1. Interacts with NFE2L1. Interacts with USP36, counteracting ubiquitination of MYC. Interacts with NR1D1. Interacts with RICTOR; mediates RICTOR ubiquitination and degradation. Interacts with USP38, counteracting ubiquitination of MYC. In terms of assembly, (Microbial infection) Interacts (via WD repeats) with SV40 large T antigen (via CPD region). Post-translationally, phosphorylation at Thr-205 promotes interaction with PIN1, leading to disrupt FBXW7 dimerization and promoting FBXW7 autoubiquitination and degradation. Phosphorylated by ATM at Ser-26 in response to DNA damage, promoting recruitment to DNA damage sites and 'Lys-63'-linked ubiquitination of phosphorylated XRCC4. Ubiquitinated: autoubiquitinates following phosphorylation at Thr-205 and subsequent interaction with PIN1. Ubiquitination leads to its proteasomal degradation. In terms of tissue distribution, widely expressed. Expressed in brain.

It is found in the nucleus. The protein localises to the nucleoplasm. Its subcellular location is the chromosome. It localises to the cytoplasm. The protein resides in the nucleolus. The protein operates within protein modification; protein ubiquitination. Its function is as follows. Substrate recognition component of a SCF (SKP1-CUL1-F-box protein) E3 ubiquitin-protein ligase complex which mediates the ubiquitination and subsequent proteasomal degradation of target proteins. Recognizes and binds phosphorylated sites/phosphodegrons within target proteins and thereafter brings them to the SCF complex for ubiquitination. Identified substrates include cyclin-E (CCNE1 or CCNE2), DISC1, JUN, MYC, NOTCH1 released notch intracellular domain (NICD), NFE2L1, NOTCH2, MCL1, MLST8, RICTOR, and probably PSEN1. Acts as a negative regulator of JNK signaling by binding to phosphorylated JUN and promoting its ubiquitination and subsequent degradation. Involved in bone homeostasis and negative regulation of osteoclast differentiation. Regulates the amplitude of the cyclic expression of hepatic core clock genes and genes involved in lipid and glucose metabolism via ubiquitination and proteasomal degradation of their transcriptional repressor NR1D1; CDK1-dependent phosphorylation of NR1D1 is necessary for SCF(FBXW7)-mediated ubiquitination. Also able to promote 'Lys-63'-linked ubiquitination in response to DNA damage. The SCF(FBXW7) complex facilitates double-strand break repair following phosphorylation by ATM: phosphorylation promotes localization to sites of double-strand breaks and 'Lys-63'-linked ubiquitination of phosphorylated XRCC4, enhancing DNA non-homologous end joining. This Homo sapiens (Human) protein is F-box/WD repeat-containing protein 7.